A 337-amino-acid polypeptide reads, in one-letter code: Probable tyrosine--tRNA ligase, cytoplasmic (337 aa).

Tyr35 provides a ligand contact to L-tyrosine. The 'HIGH' region signature appears at 40 to 48 (ITGKPHIAY). Residues Tyr162, Gln166, Asp169, and Gln184 each contribute to the L-tyrosine site. A 'KMSKS' region motif is present at residues 218-222 (KMSSS).

Belongs to the class-I aminoacyl-tRNA synthetase family. In terms of assembly, homodimer.

Its subcellular location is the cytoplasm. The enzyme catalyses tRNA(Tyr) + L-tyrosine + ATP = L-tyrosyl-tRNA(Tyr) + AMP + diphosphate + H(+). This is Probable tyrosine--tRNA ligase, cytoplasmic from Encephalitozoon cuniculi (strain GB-M1) (Microsporidian parasite).